The sequence spans 312 residues: 4-hydroxy-3-methylbut-2-enyl diphosphate reductase (312 aa).

Cysteine 14 provides a ligand contact to [4Fe-4S] cluster. (2E)-4-hydroxy-3-methylbut-2-enyl diphosphate contacts are provided by histidine 43 and histidine 76. Dimethylallyl diphosphate is bound by residues histidine 43 and histidine 76. Positions 43 and 76 each coordinate isopentenyl diphosphate. Cysteine 98 contributes to the [4Fe-4S] cluster binding site. Histidine 125 contributes to the (2E)-4-hydroxy-3-methylbut-2-enyl diphosphate binding site. Residue histidine 125 participates in dimethylallyl diphosphate binding. Histidine 125 contacts isopentenyl diphosphate. Glutamate 127 (proton donor) is an active-site residue. Residue threonine 165 coordinates (2E)-4-hydroxy-3-methylbut-2-enyl diphosphate. Cysteine 195 is a [4Fe-4S] cluster binding site. (2E)-4-hydroxy-3-methylbut-2-enyl diphosphate is bound by residues serine 223, serine 224, asparagine 225, and serine 269. Dimethylallyl diphosphate-binding residues include serine 223, serine 224, asparagine 225, and serine 269. Positions 223, 224, 225, and 269 each coordinate isopentenyl diphosphate.

The protein belongs to the IspH family. Requires [4Fe-4S] cluster as cofactor.

The enzyme catalyses isopentenyl diphosphate + 2 oxidized [2Fe-2S]-[ferredoxin] + H2O = (2E)-4-hydroxy-3-methylbut-2-enyl diphosphate + 2 reduced [2Fe-2S]-[ferredoxin] + 2 H(+). It carries out the reaction dimethylallyl diphosphate + 2 oxidized [2Fe-2S]-[ferredoxin] + H2O = (2E)-4-hydroxy-3-methylbut-2-enyl diphosphate + 2 reduced [2Fe-2S]-[ferredoxin] + 2 H(+). Its pathway is isoprenoid biosynthesis; dimethylallyl diphosphate biosynthesis; dimethylallyl diphosphate from (2E)-4-hydroxy-3-methylbutenyl diphosphate: step 1/1. It participates in isoprenoid biosynthesis; isopentenyl diphosphate biosynthesis via DXP pathway; isopentenyl diphosphate from 1-deoxy-D-xylulose 5-phosphate: step 6/6. In terms of biological role, catalyzes the conversion of 1-hydroxy-2-methyl-2-(E)-butenyl 4-diphosphate (HMBPP) into a mixture of isopentenyl diphosphate (IPP) and dimethylallyl diphosphate (DMAPP). Acts in the terminal step of the DOXP/MEP pathway for isoprenoid precursor biosynthesis. This is 4-hydroxy-3-methylbut-2-enyl diphosphate reductase from Leptospira interrogans serogroup Icterohaemorrhagiae serovar copenhageni (strain Fiocruz L1-130).